Reading from the N-terminus, the 263-residue chain is Troponin T, slow skeletal muscle (263 aa).

Over residues 1 to 38 (MSDAEEQEYEEEQPEEEEAAEEEEEAPEEPEPAAEPEE) the composition is skewed to acidic residues. Disordered regions lie at residues 1 to 64 (MSDA…RVDF) and 109 to 154 (AERA…KKKV). Ser-2 carries the post-translational modification Phosphoserine; by CK2. Over residues 44–56 (SRPVVPPLIPPKI) the composition is skewed to pro residues. The span at 109 to 150 (AERAEQQRFRTEKERERQAKLAEEKMRKEEEEAKKRAEDDAK) shows a compositional bias: basic and acidic residues.

This sequence belongs to the troponin T family. As to quaternary structure, interacts with TPM3. Expressed dominantly in slow muscles, like masseter, diaphragm, psoas major and spinnalis. Isoform 2 is also expressed in fast muscles.

In terms of biological role, troponin T is the tropomyosin-binding subunit of troponin, the thin filament regulatory complex which confers calcium-sensitivity to striated muscle actomyosin ATPase activity. The polypeptide is Troponin T, slow skeletal muscle (TNNT1) (Bos taurus (Bovine)).